The chain runs to 92 residues: Non-specific lipid-transfer protein 1 (92 aa).

4 disulfide bridges follow: cysteine 4–cysteine 52, cysteine 14–cysteine 28, cysteine 29–cysteine 74, and cysteine 50–cysteine 88.

This sequence belongs to the plant LTP family. In terms of tissue distribution, expressed in seeds and, at very low levels, in pulp of fruit (at protein level).

In terms of biological role, plant non-specific lipid-transfer proteins transfer phospholipids as well as galactolipids across membranes. May play a role in wax or cutin deposition in the cell walls of expanding epidermal cells and certain secretory tissues. In Actinidia deliciosa (Kiwi), this protein is Non-specific lipid-transfer protein 1.